The sequence spans 402 residues: Queuine tRNA-ribosyltransferase-like protein (402 aa).

This sequence belongs to the queuine tRNA-ribosyltransferase family.

This is Queuine tRNA-ribosyltransferase-like protein from Theileria annulata.